We begin with the raw amino-acid sequence, 358 residues long: Polyadenylate-binding protein-interacting protein 11 (358 aa).

Low complexity predominate over residues 1 to 19 (MAVVETGAAATAADAGGVV). A disordered region spans residues 1–45 (MAVVETGAAATAADAGGVVIQPPPSSPPSSMTSQDSGVSSDDQNH). The segment covering 31–41 (MTSQDSGVSSD) has biased composition (polar residues). The PAM2-like signature appears at 92–102 (KLNPMAEEFVP). Positions 136 to 164 (GGYGNENGGFRRKKSFGQGKRRMNARTSM) are disordered. Residues 145–159 (FRRKKSFGQGKRRMN) show a composition bias toward basic residues. The Bipartite nuclear localization signal motif lies at 146–157 (RRKKSFGQGKRR). 2 consecutive RRM domains span residues 173-248 (RTVY…PSKT) and 270-346 (RTIY…PSKT).

Expressed in cauline leaves, stems, immature siliques and primary inflorescences.

It localises to the nucleus. This chain is Polyadenylate-binding protein-interacting protein 11 (CID11), found in Arabidopsis thaliana (Mouse-ear cress).